Reading from the N-terminus, the 201-residue chain is Imidazole glycerol phosphate synthase subunit HisH (201 aa).

One can recognise a Glutamine amidotransferase type-1 domain in the interval 1–201 (MIAIIDYGAG…LLKRYEEMIR (201 aa)). Residue cysteine 79 is the Nucleophile of the active site. Catalysis depends on residues histidine 181 and glutamate 183.

Heterodimer of HisH and HisF.

The protein resides in the cytoplasm. It carries out the reaction 5-[(5-phospho-1-deoxy-D-ribulos-1-ylimino)methylamino]-1-(5-phospho-beta-D-ribosyl)imidazole-4-carboxamide + L-glutamine = D-erythro-1-(imidazol-4-yl)glycerol 3-phosphate + 5-amino-1-(5-phospho-beta-D-ribosyl)imidazole-4-carboxamide + L-glutamate + H(+). The enzyme catalyses L-glutamine + H2O = L-glutamate + NH4(+). It participates in amino-acid biosynthesis; L-histidine biosynthesis; L-histidine from 5-phospho-alpha-D-ribose 1-diphosphate: step 5/9. IGPS catalyzes the conversion of PRFAR and glutamine to IGP, AICAR and glutamate. The HisH subunit catalyzes the hydrolysis of glutamine to glutamate and ammonia as part of the synthesis of IGP and AICAR. The resulting ammonia molecule is channeled to the active site of HisF. This chain is Imidazole glycerol phosphate synthase subunit HisH, found in Oceanobacillus iheyensis (strain DSM 14371 / CIP 107618 / JCM 11309 / KCTC 3954 / HTE831).